A 292-amino-acid polypeptide reads, in one-letter code: NAD kinase (292 aa).

The Proton acceptor role is filled by Asp73. NAD(+) contacts are provided by residues 73–74 (DG), 147–148 (NE), His158, Arg175, Asp177, 188–193 (TAYSLS), and Gln247.

It belongs to the NAD kinase family. A divalent metal cation is required as a cofactor.

The protein resides in the cytoplasm. It catalyses the reaction NAD(+) + ATP = ADP + NADP(+) + H(+). In terms of biological role, involved in the regulation of the intracellular balance of NAD and NADP, and is a key enzyme in the biosynthesis of NADP. Catalyzes specifically the phosphorylation on 2'-hydroxyl of the adenosine moiety of NAD to yield NADP. This Salmonella choleraesuis (strain SC-B67) protein is NAD kinase.